The primary structure comprises 862 residues: Protein sey1 (862 aa).

Positions methionine 1 to histidine 21 are disordered. Residues methionine 1–glutamine 744 lie on the Cytoplasmic side of the membrane. The span at glycine 11–histidine 21 shows a compositional bias: polar residues. One can recognise a GB1/RHD3-type G domain in the interval glycine 53–tyrosine 288. Glycine 63–serine 70 serves as a coordination point for GTP. A coiled-coil region spans residues phenylalanine 485–isoleucine 506. The chain crosses the membrane as a helical span at residues valine 745–leucine 765. Over arginine 766 to proline 768 the chain is Lumenal. The helical transmembrane segment at isoleucine 769 to leucine 789 threads the bilayer. Residues leucine 790–isoleucine 862 lie on the Cytoplasmic side of the membrane. The tract at residues isoleucine 840–isoleucine 862 is disordered.

It belongs to the TRAFAC class dynamin-like GTPase superfamily. GB1/RHD3 GTPase family. RHD3 subfamily.

It localises to the endoplasmic reticulum membrane. Its function is as follows. Cooperates with the reticulon proteins and tubule-shaping DP1 family proteins to generate and maintain the structure of the tubular endoplasmic reticulum network. Has GTPase activity, which is required for its function in ER organization. The chain is Protein sey1 (sey1) from Neurospora crassa (strain ATCC 24698 / 74-OR23-1A / CBS 708.71 / DSM 1257 / FGSC 987).